We begin with the raw amino-acid sequence, 900 residues long: Zinc finger protein 62 homolog (900 aa).

The interval 1-97 (MSHLKTSTED…EASEKSLHLS (97 aa)) is disordered. Lys5 participates in a covalent cross-link: Glycyl lysine isopeptide (Lys-Gly) (interchain with G-Cter in SUMO2). Over residues 9–18 (EDEEPTEEYE) the composition is skewed to acidic residues. Positions 47 to 73 (SKVENQQKKPVENRMKEDKSSIREAIS) are enriched in basic and acidic residues. Residues Lys48, Lys62, Lys65, Lys82, and Lys92 each participate in a glycyl lysine isopeptide (Lys-Gly) (interchain with G-Cter in SUMO2) cross-link. Residues 83 to 94 (TEQEGEASEKSL) are compositionally biased toward basic and acidic residues. 13 consecutive C2H2-type zinc fingers follow at residues 225-247 (CKCD…KRIH), 253-275 (YECG…KRIH), 281-303 (YECD…KRIH), 309-331 (YECD…KSIH), 337-359 (YKCD…KVIH), 365-387 (YECD…KRIH), 393-415 (YKCD…KSIH), 421-443 (HECK…RTIH), 449-471 (YVCD…RRLH), 477-499 (YKCD…KGIH), 505-527 (YKCS…KRIH), 533-555 (FGCD…KRIH), and 561-583 (YKCE…KSVH). A Glycyl lysine isopeptide (Lys-Gly) (interchain with G-Cter in SUMO2) cross-link involves residue Lys587. 10 consecutive C2H2-type zinc fingers follow at residues 589–611 (FKCD…KKVH), 617–639 (YKCD…RRVH), 645–667 (YECD…KRIH), 673–695 (YECD…KSTH), 701–723 (HTCD…KRVH), 729–751 (FKCV…KRIH), 757–779 (YVCD…KRIH), 785–807 (YECD…KSVH), 813–834 (YNCE…KRIH), and 840–862 (YRCN…KRTH). Lys748 participates in a covalent cross-link: Glycyl lysine isopeptide (Lys-Gly) (interchain with G-Cter in SUMO2). A Glycyl lysine isopeptide (Lys-Gly) (interchain with G-Cter in SUMO2) cross-link involves residue Lys882.

This sequence belongs to the krueppel C2H2-type zinc-finger protein family.

The protein localises to the nucleus. Its function is as follows. May play a role in differentiating skeletal muscle. This chain is Zinc finger protein 62 homolog (ZFP62), found in Homo sapiens (Human).